The chain runs to 76 residues: Conotoxin Lt6.1 (76 aa).

Positions 1-22 (MKLTCVLIIAVLFLMDNQLITA) are cleaved as a signal peptide. Residues 23-48 (DYPRDEQVYRAVRLRDAMQKSKGSGS) constitute a propeptide that is removed on maturation. Cystine bridges form between Cys49–Cys62, Cys56–Cys67, and Cys61–Cys75.

Belongs to the conotoxin O1 superfamily. In terms of tissue distribution, expressed by the venom duct.

The protein resides in the secreted. This Conus litteratus (Lettered cone) protein is Conotoxin Lt6.1.